Reading from the N-terminus, the 142-residue chain is Baculoviral IAP repeat-containing protein 5 (142 aa).

One copy of the BIR repeat lies at 18-88; that stretch reads RVSTFKNWPF…KHSSGCAFLS (71 aa). Serine 20 is modified (phosphoserine; by AURKC). The residue at position 23 (lysine 23) is an N6-acetyllysine. Threonine 34 is modified (phosphothreonine; by CDK1 and CDK15). Threonine 48 is modified (phosphothreonine). Residues cysteine 57, cysteine 60, histidine 77, and cysteine 84 each contribute to the Zn(2+) site. Residues lysine 90, lysine 110, lysine 112, and lysine 115 each carry the N6-acetyllysine modification. Threonine 117 carries the post-translational modification Phosphothreonine; by AURKB. Lysine 129 carries the post-translational modification N6-acetyllysine.

The protein belongs to the IAP family. Monomer or homodimer. Exists as a homodimer in the apo state and as a monomer in the CPC-bound state. The monomer protects cells against apoptosis more efficiently than the dimer. Only the dimeric form is capable of enhancing tubulin stability in cells. When phosphorylated, interacts with LAMTOR5/HBXIP; the resulting complex binds pro-CASP9, as well as active CASP9, but much less efficiently. Component of the chromosomal passenger complex (CPC) composed of at least BIRC5/survivin, CDCA8/borealin, INCENP, AURKB or AURKC; in the complex forms a triple-helix bundle-based subcomplex with INCENP and CDCA8. Interacts with JTB. Interacts (via BIR domain) with histone H3 phosphorylated at 'Thr-3' (H3pT3). Interacts with EVI5. Interacts with GTP-bound RAN in both the S and M phases of the cell cycle. Interacts with USP9X. Interacts with tubulin. Interacts with BIRC2/c-IAP1. The acetylated form at Lys-129 interacts with STAT3. The monomeric form deacetylated at Lys-129 interacts with XPO1/CRM1. The monomeric form interacts with XIAP/BIRC4. Both the dimeric and monomeric form can interact with DIABLO/SMAC. Interacts with BIRC6/bruce. Interacts with FBXL7; this interaction facilitates the polyubiquitination and subsequent proteasomal degradation of BIRC5 by the SCF(FBXL7) E3 ubiquitin-protein ligase complex. Post-translationally, ubiquitinated by the Cul9-RING ubiquitin-protein ligase complex, leading to its degradation. Ubiquitination is required for centrosomal targeting. Deubiquitinated by USP35 or USP38; leading to stabilization. Acetylation at Lys-129 results in its homodimerization, while deacetylation promotes the formation of monomers which heterodimerize with XPO1/CRM1 which facilitates its nuclear export. The acetylated form represses STAT3 transactivation. The dynamic equilibrium between its acetylation and deacetylation at Lys-129 determines its interaction with XPO1/CRM1, its subsequent subcellular localization, and its ability to inhibit STAT3 transactivation. In terms of processing, in vitro phosphorylation at Thr-117 by AURKB prevents interaction with INCENP and localization to mitotic chromosomes. Phosphorylation at Thr-48 by CK2 is critical for its mitotic and anti-apoptotic activities. Phosphorylation at Thr-34 by CDK15 is critical for its anti-apoptotic activity. Phosphorylation at Ser-20 by AURKC is critical for regulation of proper chromosome alignment and segregation, and possibly cytokinesis.

It is found in the cytoplasm. The protein localises to the nucleus. Its subcellular location is the chromosome. The protein resides in the centromere. It localises to the cytoskeleton. It is found in the spindle. The protein localises to the kinetochore. Its subcellular location is the midbody. Its function is as follows. Multitasking protein that has dual roles in promoting cell proliferation and preventing apoptosis. Component of a chromosome passage protein complex (CPC) which is essential for chromosome alignment and segregation during mitosis and cytokinesis. Acts as an important regulator of the localization of this complex; directs CPC movement to different locations from the inner centromere during prometaphase to midbody during cytokinesis and participates in the organization of the center spindle by associating with polymerized microtubules. Involved in the recruitment of CPC to centromeres during early mitosis via association with histone H3 phosphorylated at 'Thr-3' (H3pT3) during mitosis. The complex with RAN plays a role in mitotic spindle formation by serving as a physical scaffold to help deliver the RAN effector molecule TPX2 to microtubules. May counteract a default induction of apoptosis in G2/M phase. The acetylated form represses STAT3 transactivation of target gene promoters. May play a role in neoplasia. Inhibitor of CASP3 and CASP7. Essential for the maintenance of mitochondrial integrity and function. The chain is Baculoviral IAP repeat-containing protein 5 (BIRC5) from Canis lupus familiaris (Dog).